Reading from the N-terminus, the 122-residue chain is UPF0102 protein CA_C1763 (122 aa).

This sequence belongs to the UPF0102 family.

This chain is UPF0102 protein CA_C1763, found in Clostridium acetobutylicum (strain ATCC 824 / DSM 792 / JCM 1419 / IAM 19013 / LMG 5710 / NBRC 13948 / NRRL B-527 / VKM B-1787 / 2291 / W).